The primary structure comprises 294 residues: tRNA dimethylallyltransferase (294 aa).

9–16 provides a ligand contact to ATP; the sequence is GATATGKS. Residue 11-16 coordinates substrate; sequence TATGKS. An interaction with substrate tRNA region spans residues 34–37; sequence DSRQ.

Belongs to the IPP transferase family. As to quaternary structure, monomer. It depends on Mg(2+) as a cofactor.

The enzyme catalyses adenosine(37) in tRNA + dimethylallyl diphosphate = N(6)-dimethylallyladenosine(37) in tRNA + diphosphate. Functionally, catalyzes the transfer of a dimethylallyl group onto the adenine at position 37 in tRNAs that read codons beginning with uridine, leading to the formation of N6-(dimethylallyl)adenosine (i(6)A). This Trichormus variabilis (strain ATCC 29413 / PCC 7937) (Anabaena variabilis) protein is tRNA dimethylallyltransferase.